A 119-amino-acid chain; its full sequence is Large ribosomal subunit protein bL20 (119 aa).

It belongs to the bacterial ribosomal protein bL20 family.

Binds directly to 23S ribosomal RNA and is necessary for the in vitro assembly process of the 50S ribosomal subunit. It is not involved in the protein synthesizing functions of that subunit. This is Large ribosomal subunit protein bL20 from Halorhodospira halophila (strain DSM 244 / SL1) (Ectothiorhodospira halophila (strain DSM 244 / SL1)).